The following is a 208-amino-acid chain: Small ribosomal subunit protein eS8 (208 aa).

The tract at residues 1–33 (MGISRDHWHKRRATGGKRKPIRKKRKFELGRPA) is disordered. Residues 7–26 (HWHKRRATGGKRKPIRKKRK) show a composition bias toward basic residues.

The protein belongs to the eukaryotic ribosomal protein eS8 family.

The chain is Small ribosomal subunit protein eS8 (RpS8) from Apis mellifera (Honeybee).